The sequence spans 510 residues: MIWNNRLILALSLLLRLHLAISPSYIHPDEHFQGPEYALGNLFDWAHETTWEFRGDSPIRSFVPLWILYTAPLSVLNFLWKGQLSPREAYWFIRAGHALAYWILGDMALDRLSDSKKSKTKTLYLVGCSYVTWSYQSHTFSNSTETLLVLWCLVIIKESQQRHSMHHQRVHKFMDAGLLGLLIVIGTWNRVTFPLWLIVPGLTYLRKYLIHNISSLILLIASVALTAFFVIHVDSVHYDLEWTITPLNSFLYNSQGHNLAEHGIHNRLTHLVSNLPVLLGPLLILLRTPSQYWKSLQFQSAISGVFFLSLFPHQEARFLMPAVPLLISCYDINAVPRRFTSAIFLLSYVFNIIMGFLMGTLHQGGVVPAQHYLSKHVDSGSHTVVYWRTYKPPSWLLGIPEGELEILDKDHPLGTNLFKRVTDEIENIQIRHKKTMVTVLDLMGSSPEYVNDVIAALAPINPLLVAPVAGLKELDLPAYKEVWKTRFHLGLDHIDGLESLEPGLVVLEVL.

The next 3 membrane-spanning stretches (helical) occupy residues 7-27, 62-82, and 89-109; these read LILA…SYIH, FVPL…LWKG, and AYWF…DMAL. N-linked (GlcNAc...) asparagine glycosylation occurs at N142. Residues 179–199 traverse the membrane as a helical segment; sequence LGLLIVIGTWNRVTFPLWLIV. An N-linked (GlcNAc...) asparagine glycan is attached at N212. Helical transmembrane passes span 213–233, 268–288, and 339–359; these read ISSL…VIHV, LTHL…LLRT, and FTSA…FLMG.

It belongs to the glycosyltransferase 22 family. PIGZ subfamily.

The protein resides in the endoplasmic reticulum membrane. The protein operates within glycolipid biosynthesis; glycosylphosphatidylinositol-anchor biosynthesis. Its function is as follows. Alpha-1,2-mannosyltransferase involved in glycosylphosphatidylinositol-anchor biosynthesis. Transfers a fourth mannose to trimannosyl-GPIs during GPI precursor assembly. The presence of a fourth mannose in GPI is essential in fungi. This Yarrowia lipolytica (strain CLIB 122 / E 150) (Yeast) protein is GPI mannosyltransferase 4 (SMP3).